Reading from the N-terminus, the 426-residue chain is MKLQKPKGTQDILPGDAAKWQYVESVARDTFSQYNYGEIRTPMFEHYEVISRSVGDTTDIVTKEMYDFYDKGDRHITLRPEGTAPVVRSYVENKLFAPEVQKPVKLYYIGSMFRYERPQAGRLREFHQIGVECFGAANPATDVETIAMAYHLFEKLGIKDVTLHLNSLGSPESRAAYRQALIDYLTPMRDQLSKDSQRRLDENPLRVLDSKEKEDKLAVEKAPSILDYLDEESQAHFEAVKDMLEALDIPYVIDTNMVRGLDYYNHTIFEFITSVEGSDLTICAGGRYDSLVGYFGGPETPGFGFGLGLERLLMVIEKQGITLPIETEMDVYLAVLGDGANSKALELVQAIRRQGFTAERDYLGRKIKAQFKSADTFKAKLVMTLGESEVEAGKAVIKNNRSRQEVEVSFEDMMTNFANISEQLLS.

The protein belongs to the class-II aminoacyl-tRNA synthetase family. In terms of assembly, homodimer.

It localises to the cytoplasm. It catalyses the reaction tRNA(His) + L-histidine + ATP = L-histidyl-tRNA(His) + AMP + diphosphate + H(+). The chain is Histidine--tRNA ligase from Streptococcus pyogenes serotype M6 (strain ATCC BAA-946 / MGAS10394).